A 126-amino-acid chain; its full sequence is Large ribosomal subunit protein bL17 (126 aa).

Belongs to the bacterial ribosomal protein bL17 family. In terms of assembly, part of the 50S ribosomal subunit. Contacts protein L32.

This chain is Large ribosomal subunit protein bL17, found in Lactococcus lactis subsp. lactis (strain IL1403) (Streptococcus lactis).